A 414-amino-acid polypeptide reads, in one-letter code: Serine hydroxymethyltransferase (414 aa).

(6S)-5,6,7,8-tetrahydrofolate-binding positions include Leu-116 and 120 to 122 (GHL). At Lys-224 the chain carries N6-(pyridoxal phosphate)lysine. (6S)-5,6,7,8-tetrahydrofolate is bound by residues Glu-240 and 348-350 (SPF).

It belongs to the SHMT family. In terms of assembly, homodimer. It depends on pyridoxal 5'-phosphate as a cofactor.

It localises to the cytoplasm. The catalysed reaction is (6R)-5,10-methylene-5,6,7,8-tetrahydrofolate + glycine + H2O = (6S)-5,6,7,8-tetrahydrofolate + L-serine. It participates in one-carbon metabolism; tetrahydrofolate interconversion. Its pathway is amino-acid biosynthesis; glycine biosynthesis; glycine from L-serine: step 1/1. Functionally, catalyzes the reversible interconversion of serine and glycine with tetrahydrofolate (THF) serving as the one-carbon carrier. This reaction serves as the major source of one-carbon groups required for the biosynthesis of purines, thymidylate, methionine, and other important biomolecules. Also exhibits THF-independent aldolase activity toward beta-hydroxyamino acids, producing glycine and aldehydes, via a retro-aldol mechanism. The polypeptide is Serine hydroxymethyltransferase (Campylobacter jejuni subsp. jejuni serotype O:23/36 (strain 81-176)).